A 302-amino-acid polypeptide reads, in one-letter code: Putative T-box protein 34 (302 aa).

A DNA-binding region (T-box) is located at residues 5 to 180 (IVNEHKYREL…KMNLAPGSSQ (176 aa)).

It is found in the nucleus. The chain is Putative T-box protein 34 (tbx-34) from Caenorhabditis elegans.